Reading from the N-terminus, the 83-residue chain is NADH dehydrogenase [ubiquinone] iron-sulfur protein 5-B (83 aa).

The CHCH domain occupies 11-52; sequence KGRCYDFWMDFSECMSHCREPKDCTLLREDYLECLHHSKEFQ. Short sequence motifs (cx9C motif) lie at residues 14 to 24 and 34 to 44; these read CYDFWMDFSEC and CTLLREDYLEC. Cystine bridges form between Cys-14-Cys-44 and Cys-24-Cys-34. The segment at 62–83 is disordered; it reads QRKLRAASRKGEETGDGTHTHH.

The protein belongs to the complex I NDUFS5 subunit family. In terms of assembly, complex I is composed of at least 49 different subunits. This is a component of the iron-sulfur (IP) fragment of the enzyme.

It is found in the mitochondrion. The protein resides in the mitochondrion inner membrane. It localises to the mitochondrion intermembrane space. In terms of biological role, accessory subunit of the mitochondrial membrane respiratory chain NADH dehydrogenase (Complex I), that is believed not to be involved in catalysis. Complex I functions in the transfer of electrons from NADH to the respiratory chain. The immediate electron acceptor for the enzyme is believed to be ubiquinone. This chain is NADH dehydrogenase [ubiquinone] iron-sulfur protein 5-B, found in Arabidopsis thaliana (Mouse-ear cress).